Reading from the N-terminus, the 524-residue chain is Secologanin synthase 1 (524 aa).

Over 1–11 the chain is Lumenal; the sequence is MEMDMDTIRKA. Residues 12–32 traverse the membrane as a helical segment; the sequence is IAATIFALVMAWAWRVLDWAW. Residues 33 to 524 are Cytoplasmic-facing; it reads FTPKRIEKRL…SHVIYKKLES (492 aa). Cys-470 provides a ligand contact to heme.

The protein belongs to the cytochrome P450 family. It depends on heme as a cofactor. Upper and lower leaf epidermis.

It is found in the endoplasmic reticulum membrane. It catalyses the reaction loganin + reduced [NADPH--hemoprotein reductase] + O2 = secologanin + oxidized [NADPH--hemoprotein reductase] + 2 H2O + H(+). It carries out the reaction secologanin + reduced [NADPH--hemoprotein reductase] + O2 = secoxyloganin + oxidized [NADPH--hemoprotein reductase] + H2O + 2 H(+). It functions in the pathway alkaloid biosynthesis; secologanin biosynthesis. Its function is as follows. Component of the seco-iridoid and derivatives monoterpenoid indole alkaloids (MIAs, e.g. secologanin) biosynthesis pathway. Catalyzes the conversion of loganin into secologanin. Catalyzes the conversion of secologanin into secoxyloganin. The protein is Secologanin synthase 1 of Catharanthus roseus (Madagascar periwinkle).